The following is a 60-amino-acid chain: Large ribosomal subunit protein bL32 (60 aa).

It belongs to the bacterial ribosomal protein bL32 family.

The sequence is that of Large ribosomal subunit protein bL32 (rpmF) from Thermotoga maritima (strain ATCC 43589 / DSM 3109 / JCM 10099 / NBRC 100826 / MSB8).